We begin with the raw amino-acid sequence, 122 residues long: Succinate dehydrogenase assembly factor 3, mitochondrial (122 aa).

Residues 1-47 constitute a mitochondrion transit peptide; it reads MHPSVVRLVKPRRPERITSPILPPLPLYRAILRAHHRKLPQELRYLG.

It belongs to the complex I LYR family. SDHAF3 subfamily. As to quaternary structure, interacts with the iron-sulfur protein subunit within the SDH catalytic dimer.

It is found in the mitochondrion matrix. Functionally, plays an essential role in the assembly of succinate dehydrogenase (SDH), an enzyme complex (also referred to as respiratory complex II) that is a component of both the tricarboxylic acid (TCA) cycle and the mitochondrial electron transport chain, and which couples the oxidation of succinate to fumarate with the reduction of ubiquinone (coenzyme Q) to ubiquinol. Promotes maturation of the iron-sulfur protein subunit of the SDH catalytic dimer, protecting it from the deleterious effects of oxidants. May act together with SDHAF1. The chain is Succinate dehydrogenase assembly factor 3, mitochondrial from Candida albicans (strain SC5314 / ATCC MYA-2876) (Yeast).